Here is a 543-residue protein sequence, read N- to C-terminus: CTP synthase (543 aa).

Residues 1 to 265 form an amidoligase domain region; it reads MARYIFITGG…DDEVLAAFAI (265 aa). Ser13 serves as a coordination point for CTP. Ser13 provides a ligand contact to UTP. Position 14–19 (14–19) interacts with ATP; the sequence is SLGKGL. Position 54 (Tyr54) interacts with L-glutamine. Position 71 (Asp71) interacts with ATP. 2 residues coordinate Mg(2+): Asp71 and Glu139. Residues 146-148, 186-191, and Lys222 each bind CTP; these read DIE and KTKPTQ. UTP contacts are provided by residues 186–191 and Lys222; that span reads KTKPTQ. 238 to 240 contributes to the ATP binding site; that stretch reads RDA. Residues 291–542 form the Glutamine amidotransferase type-1 domain; the sequence is TIAIVGKYTG…VQAALVQSRL (252 aa). Gly353 is a binding site for L-glutamine. The active-site Nucleophile; for glutamine hydrolysis is Cys380. L-glutamine is bound by residues 381–384, Glu404, and Arg470; that span reads FGMQ. Active-site residues include His515 and Glu517.

This sequence belongs to the CTP synthase family. In terms of assembly, homotetramer.

The enzyme catalyses UTP + L-glutamine + ATP + H2O = CTP + L-glutamate + ADP + phosphate + 2 H(+). It carries out the reaction L-glutamine + H2O = L-glutamate + NH4(+). The catalysed reaction is UTP + NH4(+) + ATP = CTP + ADP + phosphate + 2 H(+). It participates in pyrimidine metabolism; CTP biosynthesis via de novo pathway; CTP from UDP: step 2/2. Its activity is regulated as follows. Allosterically activated by GTP, when glutamine is the substrate; GTP has no effect on the reaction when ammonia is the substrate. The allosteric effector GTP functions by stabilizing the protein conformation that binds the tetrahedral intermediate(s) formed during glutamine hydrolysis. Inhibited by the product CTP, via allosteric rather than competitive inhibition. Its function is as follows. Catalyzes the ATP-dependent amination of UTP to CTP with either L-glutamine or ammonia as the source of nitrogen. Regulates intracellular CTP levels through interactions with the four ribonucleotide triphosphates. This Rhodopseudomonas palustris (strain ATCC BAA-98 / CGA009) protein is CTP synthase.